We begin with the raw amino-acid sequence, 353 residues long: UDP-xylose transporter 2 (353 aa).

The next 10 membrane-spanning stretches (helical) occupy residues 7–27, 31–51, 75–95, 100–120, 132–152, 154–174, 194–214, 224–244, 250–270, and 280–300; these read FQLG…SIVI, ALIS…HLLV, VLGF…SLGF, FYQM…TIFF, LVIL…LNML, SVLS…TNTI, AITL…QNVF, FFIV…FLVI, VTYQ…GYLL, and ILGI…CTLE. The interval 308–353 is disordered; the sequence is TSTQLPQMDENEKDPLVSAENGSGLISDNGVQKQDPVWNSNKDFQA. Residues 327 to 353 are compositionally biased toward polar residues; sequence ENGSGLISDNGVQKQDPVWNSNKDFQA. Ser334 is subject to Phosphoserine.

It belongs to the TPT transporter family. TPT (TC 2.A.7.9) subfamily. As to expression, ubiquitous.

The protein localises to the golgi apparatus membrane. Nucleotide-sugar transporter that transports UDP-xylose and UMP in a strict counter-exchange mode. In Arabidopsis thaliana (Mouse-ear cress), this protein is UDP-xylose transporter 2.